The sequence spans 363 residues: Neurogenic differentiation factor 2 (363 aa).

Positions 1–116 are disordered; it reads MLTRLFKEPS…VRRQKANARE (116 aa). A compositionally biased stretch (basic and acidic residues) spans 28–44; that stretch reads EDSKTKDEEQERCRLGD. The span at 64–83 shows a compositional bias: acidic residues; it reads AGEEDYDEDVDEDDCGEEGD. The span at 87-98 shows a compositional bias: basic residues; sequence PKKRGPKKRKMT. The Nuclear localization signal signature appears at 93 to 99; it reads KKRKMTP. Residues 107–159 form the bHLH domain; the sequence is VRRQKANARERTRMHDLNSALDNLLKVVPCYSKTQKLSKIETLRLAKNYIWAL.

In terms of assembly, efficient DNA binding requires dimerization with another bHLH protein. In terms of tissue distribution, in adult, expressed strongly in brain and more weakly in skin, muscle, eye and ovary.

The protein localises to the nucleus. Transcriptional regulator. Appears to mediate neuronal differentiation. In Danio rerio (Zebrafish), this protein is Neurogenic differentiation factor 2.